The sequence spans 568 residues: Hemagglutinin-neuraminidase (568 aa).

At 1–18 (MSGAEGNTNKRTFRAVFR) the chain is on the intravirion side. A helical transmembrane segment spans residues 19–39 (TLIILITLTILALSAAILYEV). Over 40 to 568 (THTSNGSESN…VPFLREVIIT (529 aa)) the chain is Virion surface. N-linked (GlcNAc...) asparagine; by host glycans are attached at residues asparagine 44 and asparagine 111. Disulfide bonds link cysteine 162–cysteine 186, cysteine 176–cysteine 237, and cysteine 228–cysteine 241. The segment at 224–229 (NRKSCS) is involved in neuraminidase activity. 2 N-linked (GlcNAc...) asparagine; by host glycosylation sites follow: asparagine 268 and asparagine 280. 3 cysteine pairs are disulfide-bonded: cysteine 334-cysteine 455, cysteine 366-cysteine 376, and cysteine 449-cysteine 459. A glycan (N-linked (GlcNAc...) asparagine; by host) is linked at asparagine 382. Asparagine 513 carries N-linked (GlcNAc...) asparagine; by host glycosylation. Cysteine 531 and cysteine 542 are oxidised to a cystine.

This sequence belongs to the paramyxoviruses hemagglutinin-neuraminidase family. In terms of assembly, homotetramer; composed of disulfide-linked homodimers.

It localises to the virion membrane. It is found in the host cell membrane. The catalysed reaction is Hydrolysis of alpha-(2-&gt;3)-, alpha-(2-&gt;6)-, alpha-(2-&gt;8)- glycosidic linkages of terminal sialic acid residues in oligosaccharides, glycoproteins, glycolipids, colominic acid and synthetic substrates.. Attaches the virus to sialic acid-containing cell receptors and thereby initiating infection. Binding of HN protein to the receptor induces a conformational change that allows the F protein to trigger virion/cell membranes fusion. In terms of biological role, neuraminidase activity ensures the efficient spread of the virus by dissociating the mature virions from the neuraminic acid containing glycoproteins. In Simiiformes (SV41), this protein is Hemagglutinin-neuraminidase (HN).